Reading from the N-terminus, the 878-residue chain is Aminopeptidase M1-C (878 aa).

A required for membrane association region spans residues 102–209 (LGEGVLAMDF…MSTYLVAIVV (108 aa)). Residues Glu-142 and 275–279 (GAMEN) each bind substrate. His-311 is a Zn(2+) binding site. Glu-312 functions as the Proton acceptor in the catalytic mechanism. 2 residues coordinate Zn(2+): His-315 and Glu-334. A Dileucine internalization motif motif is present at residues 726–727 (LL).

The protein belongs to the peptidase M1 family. As to quaternary structure, homodimer. Zn(2+) is required as a cofactor.

The protein localises to the membrane. Its subcellular location is the microsome membrane. It localises to the cytoplasm. The catalysed reaction is Release of an N-terminal amino acid, Xaa-|-Yaa- from a peptide, amide or arylamide. Xaa is preferably Ala, but may be most amino acids including Pro (slow action). When a terminal hydrophobic residue is followed by a prolyl residue, the two may be released as an intact Xaa-Pro dipeptide.. This is Aminopeptidase M1-C from Oryza sativa subsp. japonica (Rice).